Here is a 614-residue protein sequence, read N- to C-terminus: Vitamin B12 transporter BtuB (614 aa).

An N-terminal signal peptide occupies residues 1-20 (MIKKATLLTAFSVTAFSAWA). The short motif at 26–33 (DTLVVTAN) is the TonB box element. The 115-residue stretch at 38-152 (PRSAVLAPVT…IGGVVNIITT (115 aa)) folds into the TBDR plug domain. Cyanocob(III)alamin-binding positions include S85, N92, and 110–111 (VS). Residues 155–614 (NPGTELTAGW…EYTLSGSYTF (460 aa)) enclose the TBDR beta-barrel domain. 3 beta stranded membrane passes run 158 to 165 (TELTAGWG), 169 to 178 (YQNYDISTQQ), and 184 to 195 (TRATLIGDYEYT). D199, Q211, D213, and D215 together coordinate Ca(2+). Transmembrane regions (beta stranded) follow at residues 217–227 (FLSKTLYGALE) and 232–248 (DRWS…NRTD). 2 residues coordinate Ca(2+): Y249 and D250. Residue A251 participates in cyanocob(III)alamin binding. D261 provides a ligand contact to Ca(2+). A run of 14 beta stranded transmembrane segments spans residues 263–277 (RKLY…LHFN), 279–296 (ERIQ…KDYN), 309–325 (TLDE…NSVV), 328–337 (HGNVGAGVDW), 353–369 (YDQR…QQLG), 371–381 (FTLEAAARSDD), 385–400 (FGRH…WEFI), 403–417 (YRFI…KAPN), 434–443 (KSKQWEGAFE), 449–458 (VSWRISGYRN), 473–490 (YYNE…TANF), 494–509 (PLTH…ARNA), 517–529 (RRSK…QLDW), and 535–550 (DWGM…YDSD). Cyanocob(III)alamin is bound at residue T309. A cyanocob(III)alamin-binding site is contributed by R517. Y551 is a binding site for cyanocob(III)alamin. 3 beta stranded membrane-spanning segments follow: residues 558-572 (TVKM…LTVA), 585-596 (IANLFDKDYETV), and 602-614 (AGRE…SYTF). Positions 597–614 (YGYQTAGREYTLSGSYTF) match the TonB C-terminal box motif.

The protein belongs to the TonB-dependent receptor family. BtuB (TC 1.B.14.3.1) subfamily.

It is found in the cell outer membrane. Its function is as follows. Involved in the active translocation of vitamin B12 (cyanocobalamin) across the outer membrane to the periplasmic space. It derives its energy for transport by interacting with the trans-periplasmic membrane protein TonB. This chain is Vitamin B12 transporter BtuB, found in Salmonella typhimurium (strain LT2 / SGSC1412 / ATCC 700720).